Consider the following 280-residue polypeptide: Purine nucleoside phosphorylase (280 aa).

Phosphate-binding positions include S15 and 55–56 (RH). M194 provides a ligand contact to substrate. T195 lines the phosphate pocket. 218–220 (DLD) contributes to the substrate binding site.

It belongs to the PNP/MTAP phosphorylase family. MTAP subfamily. As to quaternary structure, homohexamer. Dimer of a homotrimer.

It catalyses the reaction a purine D-ribonucleoside + phosphate = a purine nucleobase + alpha-D-ribose 1-phosphate. It functions in the pathway purine metabolism; purine nucleoside salvage. In terms of biological role, purine nucleoside phosphorylase involved in purine salvage. The polypeptide is Purine nucleoside phosphorylase (Streptomyces coelicolor (strain ATCC BAA-471 / A3(2) / M145)).